The chain runs to 415 residues: Serine hydroxymethyltransferase 1 (415 aa).

(6S)-5,6,7,8-tetrahydrofolate-binding positions include L122 and 126–128 (GHL). K230 is subject to N6-(pyridoxal phosphate)lysine.

Belongs to the SHMT family. As to quaternary structure, homodimer. The cofactor is pyridoxal 5'-phosphate.

The protein resides in the cytoplasm. It carries out the reaction (6R)-5,10-methylene-5,6,7,8-tetrahydrofolate + glycine + H2O = (6S)-5,6,7,8-tetrahydrofolate + L-serine. It functions in the pathway one-carbon metabolism; tetrahydrofolate interconversion. Its pathway is amino-acid biosynthesis; glycine biosynthesis; glycine from L-serine: step 1/1. Functionally, catalyzes the reversible interconversion of serine and glycine with tetrahydrofolate (THF) serving as the one-carbon carrier. This reaction serves as the major source of one-carbon groups required for the biosynthesis of purines, thymidylate, methionine, and other important biomolecules. Also exhibits THF-independent aldolase activity toward beta-hydroxyamino acids, producing glycine and aldehydes, via a retro-aldol mechanism. This is Serine hydroxymethyltransferase 1 from Cupriavidus pinatubonensis (strain JMP 134 / LMG 1197) (Cupriavidus necator (strain JMP 134)).